A 267-amino-acid polypeptide reads, in one-letter code: Translation initiation factor 2 subunit alpha (267 aa).

The S1 motif domain maps to 10–81 (GELVVGKVDD…SAQQIDLSLK (72 aa)).

It belongs to the eIF-2-alpha family. Heterotrimer composed of an alpha, a beta and a gamma chain.

In terms of biological role, eIF-2 functions in the early steps of protein synthesis by forming a ternary complex with GTP and initiator tRNA. The chain is Translation initiation factor 2 subunit alpha from Halobacterium salinarum (strain ATCC 29341 / DSM 671 / R1).